Here is a 316-residue protein sequence, read N- to C-terminus: Adenine deaminase (316 aa).

H14, H16, and H194 together coordinate Zn(2+). The active-site Proton donor is the E197. D275 contacts Zn(2+). D276 is a binding site for substrate.

This sequence belongs to the metallo-dependent hydrolases superfamily. Adenosine and AMP deaminases family. Adenine deaminase type 2 subfamily. Zn(2+) serves as cofactor.

It carries out the reaction adenine + H2O + H(+) = hypoxanthine + NH4(+). Its function is as follows. Catalyzes the hydrolytic deamination of adenine to hypoxanthine. Plays an important role in the purine salvage pathway and in nitrogen catabolism. This chain is Adenine deaminase, found in Pseudomonas paraeruginosa (strain DSM 24068 / PA7) (Pseudomonas aeruginosa (strain PA7)).